Consider the following 979-residue polypeptide: Pimaradiene synthase pbcA (979 aa).

Residues 34 to 39 (VYDTAW) carry the VYDTAW motif motif. Positions 328-331 (DADD) match the DXDD B-type cyclization motif motif. 6 residues coordinate Mg(2+): Asp-665, Glu-669, Asn-865, Asp-866, Ser-869, and Asp-873. The DEXXE A-type cyclization motif signature appears at 665-669 (DEFME).

The protein belongs to the terpene synthase family. It depends on Mg(2+) as a cofactor.

The catalysed reaction is (2E,6E,10E)-geranylgeranyl diphosphate = ent-copalyl diphosphate. The enzyme catalyses ent-copalyl diphosphate = ent-pimara-8(14),15-diene + diphosphate. The protein operates within secondary metabolite biosynthesis; terpenoid biosynthesis. Functionally, bifunctional terpene synthase; part of the gene cluster that mediates the biosynthesis of the diterpene ent-pimara-8(14),15-diene (PD). Within the cluster, the HMG-CoA reductase AN1593 functions in the mevalonate pathway, which produces isoprenoid precursors. The geranylgeranyl pyrophosphate (GGPP) synthase AN1592 is needed in the formation of GGPP, the precursor for diterpenes. Lastly, the pimaradiene synthase pbcA performs the 2 cyclization steps that convert GGPP to ent-pimara-8(14),15-diene with ent-copalyl diphosphate as an intermediate. The putative roles of the remaining cluster enzymes in ent-pimara-8(14),15-diene biosynthesis is unclear. The cytochrome P450 monooxygenase AN1598, the glutathione S-transferase AN1595, the oxidoreductases AN1596 and AN1597 probably function as decorative enzymes. It is possible that in biological conditions the compound is oxidized to ent-pimara-8(14),15-dien-19-oic acid, which is a bioactive diterpene compound predominant in many plant extracts. The protein is Pimaradiene synthase pbcA of Emericella nidulans (strain FGSC A4 / ATCC 38163 / CBS 112.46 / NRRL 194 / M139) (Aspergillus nidulans).